We begin with the raw amino-acid sequence, 133 residues long: ATP synthase epsilon chain, chloroplastic (133 aa).

Belongs to the ATPase epsilon chain family. F-type ATPases have 2 components, CF(1) - the catalytic core - and CF(0) - the membrane proton channel. CF(1) has five subunits: alpha(3), beta(3), gamma(1), delta(1), epsilon(1). CF(0) has three main subunits: a, b and c.

Its subcellular location is the plastid. It localises to the chloroplast thylakoid membrane. Its function is as follows. Produces ATP from ADP in the presence of a proton gradient across the membrane. In Daucus carota (Wild carrot), this protein is ATP synthase epsilon chain, chloroplastic.